The following is an 89-amino-acid chain: Small ribosomal subunit protein uS15 (89 aa).

The protein belongs to the universal ribosomal protein uS15 family. In terms of assembly, part of the 30S ribosomal subunit. Forms a bridge to the 50S subunit in the 70S ribosome, contacting the 23S rRNA.

In terms of biological role, one of the primary rRNA binding proteins, it binds directly to 16S rRNA where it helps nucleate assembly of the platform of the 30S subunit by binding and bridging several RNA helices of the 16S rRNA. Its function is as follows. Forms an intersubunit bridge (bridge B4) with the 23S rRNA of the 50S subunit in the ribosome. In Nitratiruptor sp. (strain SB155-2), this protein is Small ribosomal subunit protein uS15.